The following is a 426-amino-acid chain: Glutamate-1-semialdehyde 2,1-aminomutase (426 aa).

At lysine 265 the chain carries N6-(pyridoxal phosphate)lysine.

Belongs to the class-III pyridoxal-phosphate-dependent aminotransferase family. HemL subfamily. Homodimer. It depends on pyridoxal 5'-phosphate as a cofactor.

The protein localises to the cytoplasm. The enzyme catalyses (S)-4-amino-5-oxopentanoate = 5-aminolevulinate. The protein operates within porphyrin-containing compound metabolism; protoporphyrin-IX biosynthesis; 5-aminolevulinate from L-glutamyl-tRNA(Glu): step 2/2. This chain is Glutamate-1-semialdehyde 2,1-aminomutase, found in Salmonella heidelberg (strain SL476).